Reading from the N-terminus, the 217-residue chain is Glycosylphosphatidylinositol anchor biosynthesis protein 11 (217 aa).

2 helical membrane-spanning segments follow: residues 45 to 65 (TWLT…KVFN) and 68 to 88 (NTAE…IFQF). Asn-102 is a glycosylation site (N-linked (GlcNAc...) asparagine). 4 helical membrane passes run 107 to 127 (AISI…IILF), 134 to 154 (LLWE…PAVY), 169 to 189 (YFIL…LDWD), and 197 to 217 (IPIV…GAYL).

It belongs to the PIGF family.

The protein resides in the endoplasmic reticulum membrane. The protein operates within glycolipid biosynthesis; glycosylphosphatidylinositol-anchor biosynthesis. In terms of biological role, acts in the GPI biosynthetic pathway between GlcNAc-PI synthesis and GPI transfer to protein. In Candida glabrata (strain ATCC 2001 / BCRC 20586 / JCM 3761 / NBRC 0622 / NRRL Y-65 / CBS 138) (Yeast), this protein is Glycosylphosphatidylinositol anchor biosynthesis protein 11 (GPI11).